We begin with the raw amino-acid sequence, 840 residues long: Sorting nexin-25 (840 aa).

The PXA domain maps to Met-1–Glu-164. In terms of domain architecture, RGS spans Gln-287–Leu-401. Residues Thr-434 to Arg-499 are a coiled coil. Residues Gly-508–Leu-628 enclose the PX domain. At Ser-665 the chain carries Phosphoserine.

It belongs to the sorting nexin family.

Its subcellular location is the endosome membrane. May be involved in several stages of intracellular trafficking. The sequence is that of Sorting nexin-25 (SNX25) from Homo sapiens (Human).